Consider the following 393-residue polypeptide: Lipid-A-disaccharide synthase (393 aa).

This sequence belongs to the LpxB family.

The enzyme catalyses a lipid X + a UDP-2-N,3-O-bis[(3R)-3-hydroxyacyl]-alpha-D-glucosamine = a lipid A disaccharide + UDP + H(+). It participates in bacterial outer membrane biogenesis; LPS lipid A biosynthesis. Condensation of UDP-2,3-diacylglucosamine and 2,3-diacylglucosamine-1-phosphate to form lipid A disaccharide, a precursor of lipid A, a phosphorylated glycolipid that anchors the lipopolysaccharide to the outer membrane of the cell. The sequence is that of Lipid-A-disaccharide synthase from Bordetella bronchiseptica (strain ATCC BAA-588 / NCTC 13252 / RB50) (Alcaligenes bronchisepticus).